Consider the following 523-residue polypeptide: NADP-specific glutamate dehydrogenase (523 aa).

The tract at residues 26 to 50 (CARGRSAKRDVAAKRLRSRSPRMDA) is disordered. Residue K202 is part of the active site.

This sequence belongs to the Glu/Leu/Phe/Val dehydrogenases family. Homo- and heterohexamer of alpha and beta subunits. Both subunits are encoded by the same gene. In terms of processing, the N-termini of the alpha and the beta chains are blocked.

The protein localises to the plastid. It localises to the chloroplast. The enzyme catalyses L-glutamate + NADP(+) + H2O = 2-oxoglutarate + NH4(+) + NADPH + H(+). The protein is NADP-specific glutamate dehydrogenase of Chlorella sorokiniana (Freshwater green alga).